The primary structure comprises 1703 residues: Protein TIC 214 (1703 aa).

6 helical membrane passes run 39–61 (YYGF…TFFL), 67–87 (GIIC…SIYC), 90–110 (LYVM…YMFY), 138–158 (LLLD…NPVL), 174–194 (FFLT…INSI), and 220–240 (FSIL…VPLI). Disordered regions lie at residues 615 to 643 (GPRK…KERE) and 1431 to 1494 (TKEP…WKSK). Residues 618-660 (KGKLEDKEKEKEKAAQTQTEVKKEREKEKEERVIKRFQNQSDF) adopt a coiled-coil conformation. Basic and acidic residues predominate over residues 619-643 (GKLEDKEKEKEKAAQTQTEVKKERE).

This sequence belongs to the TIC214 family. As to quaternary structure, part of the Tic complex.

It is found in the plastid. The protein resides in the chloroplast inner membrane. Its function is as follows. Involved in protein precursor import into chloroplasts. May be part of an intermediate translocation complex acting as a protein-conducting channel at the inner envelope. The chain is Protein TIC 214 from Psilotum nudum (Whisk fern).